We begin with the raw amino-acid sequence, 105 residues long: Nitrogen fixation nifHD region GlnB-like protein 1 (105 aa).

It belongs to the P(II) protein family.

Its function is as follows. Could be involved in the regulation of nitrogen fixation. The polypeptide is Nitrogen fixation nifHD region GlnB-like protein 1 (glnBA) (Methanobacterium ivanovii).